Here is a 339-residue protein sequence, read N- to C-terminus: Phosphate acyltransferase (339 aa).

The protein belongs to the PlsX family. Homodimer. Probably interacts with PlsY.

The protein localises to the cytoplasm. The enzyme catalyses a fatty acyl-[ACP] + phosphate = an acyl phosphate + holo-[ACP]. The protein operates within lipid metabolism; phospholipid metabolism. Its function is as follows. Catalyzes the reversible formation of acyl-phosphate (acyl-PO(4)) from acyl-[acyl-carrier-protein] (acyl-ACP). This enzyme utilizes acyl-ACP as fatty acyl donor, but not acyl-CoA. The protein is Phosphate acyltransferase of Clostridium perfringens (strain SM101 / Type A).